A 124-amino-acid polypeptide reads, in one-letter code: Small ribosomal subunit protein bS6 (124 aa).

It belongs to the bacterial ribosomal protein bS6 family.

In terms of biological role, binds together with bS18 to 16S ribosomal RNA. This is Small ribosomal subunit protein bS6 from Actinobacillus pleuropneumoniae serotype 5b (strain L20).